The chain runs to 159 residues: Ribosomal RNA large subunit methyltransferase H (159 aa).

Residues Leu76, Gly108, and 127-132 (FSKMTL) contribute to the S-adenosyl-L-methionine site.

It belongs to the RNA methyltransferase RlmH family. In terms of assembly, homodimer.

It is found in the cytoplasm. It catalyses the reaction pseudouridine(1915) in 23S rRNA + S-adenosyl-L-methionine = N(3)-methylpseudouridine(1915) in 23S rRNA + S-adenosyl-L-homocysteine + H(+). In terms of biological role, specifically methylates the pseudouridine at position 1915 (m3Psi1915) in 23S rRNA. The sequence is that of Ribosomal RNA large subunit methyltransferase H from Bacillus cereus (strain ATCC 14579 / DSM 31 / CCUG 7414 / JCM 2152 / NBRC 15305 / NCIMB 9373 / NCTC 2599 / NRRL B-3711).